Consider the following 164-residue polypeptide: NADH-quinone oxidoreductase subunit I (164 aa).

4Fe-4S ferredoxin-type domains follow at residues 55–85 (LRRY…IDAE) and 95–124 (TRYD…EGPN). Residues Cys-65, Cys-68, Cys-71, Cys-75, Cys-104, Cys-107, Cys-110, and Cys-114 each coordinate [4Fe-4S] cluster.

The protein belongs to the complex I 23 kDa subunit family. NDH-1 is composed of 14 different subunits. Subunits NuoA, H, J, K, L, M, N constitute the membrane sector of the complex. The cofactor is [4Fe-4S] cluster.

The protein localises to the cell inner membrane. The enzyme catalyses a quinone + NADH + 5 H(+)(in) = a quinol + NAD(+) + 4 H(+)(out). In terms of biological role, NDH-1 shuttles electrons from NADH, via FMN and iron-sulfur (Fe-S) centers, to quinones in the respiratory chain. The immediate electron acceptor for the enzyme in this species is believed to be ubiquinone. Couples the redox reaction to proton translocation (for every two electrons transferred, four hydrogen ions are translocated across the cytoplasmic membrane), and thus conserves the redox energy in a proton gradient. The protein is NADH-quinone oxidoreductase subunit I of Ruegeria pomeroyi (strain ATCC 700808 / DSM 15171 / DSS-3) (Silicibacter pomeroyi).